The chain runs to 224 residues: MNKREIARYIDQTNLKPYATKEDIIKLCDEAIEYGFYAVCVNPYRVKLAKDYLREKNADVKVASVIGFPLGATPTEVKVFEAKRALEDGADELDMVINIGALKDKDYEYVKNDIAEVVKVAHERGAKVKVIIETCYLTEEEKVKACELAKEAGADFVKTSTGFGTGGATVEDVRLMRKVVGPEMGVKAAGGIRTYEQALEMIEAGANRIGTSSGVKIVEGAPDE.

The active-site Proton donor/acceptor is Asp94. Residue Lys158 is the Schiff-base intermediate with acetaldehyde of the active site. Lys187 (proton donor/acceptor) is an active-site residue.

The protein belongs to the DeoC/FbaB aldolase family. DeoC type 1 subfamily. Homodimer.

It localises to the cytoplasm. The catalysed reaction is 2-deoxy-D-ribose 5-phosphate = D-glyceraldehyde 3-phosphate + acetaldehyde. Activated by citrate. Inhibited by NaBH(4). Activity is independent of divalent metal cations. Its function is as follows. Catalyzes a reversible aldol reaction between acetaldehyde and D-glyceraldehyde 3-phosphate to generate 2-deoxy-D-ribose 5-phosphate. Could be involved in pentose biosynthesis. The polypeptide is Deoxyribose-phosphate aldolase (Thermococcus kodakarensis (strain ATCC BAA-918 / JCM 12380 / KOD1) (Pyrococcus kodakaraensis (strain KOD1))).